The chain runs to 394 residues: Elongation factor Tu (394 aa).

Residues Lys-10 to Asp-204 enclose the tr-type G domain. The segment at Gly-19–Thr-26 is G1. Gly-19–Thr-26 is a GTP binding site. Residue Thr-26 coordinates Mg(2+). The interval Gly-60–Asn-64 is G2. A G3 region spans residues Asp-81–Gly-84. Residues Asp-81 to His-85 and Asn-136 to Asp-139 each bind GTP. Residues Asn-136–Asp-139 are G4. The tract at residues Ser-174–Leu-176 is G5.

It belongs to the TRAFAC class translation factor GTPase superfamily. Classic translation factor GTPase family. EF-Tu/EF-1A subfamily. As to quaternary structure, monomer.

The protein resides in the cytoplasm. It carries out the reaction GTP + H2O = GDP + phosphate + H(+). Its function is as follows. GTP hydrolase that promotes the GTP-dependent binding of aminoacyl-tRNA to the A-site of ribosomes during protein biosynthesis. This Mycoplasmoides gallisepticum (strain R(low / passage 15 / clone 2)) (Mycoplasma gallisepticum) protein is Elongation factor Tu.